Consider the following 1920-residue polypeptide: rRNA biogenesis protein RRP5 (1920 aa).

The interval 1-65 is disordered; that stretch reads MVVPQKKFAN…GTSLSKKERE (65 aa). 15 consecutive S1 motif domains span residues 128 to 210, 226 to 291, 314 to 384, 400 to 473, 490 to 557, 577 to 646, 661 to 733, 753 to 822, 866 to 930, 958 to 1031, 1054 to 1129, 1153 to 1224, 1260 to 1334, 1369 to 1438, and 1459 to 1529; these read GMKL…LSLR, GMVF…LSSD, GMMV…LTLS, GDIF…GTLK, GMVT…VTYK, GLVT…LSFM, GSIV…LSSK, NSVV…LSLK, GSLI…LSLR, EVHQ…LLLD, GSVV…LSVK, GQCV…LVQR, GDIL…LSLR, DMGV…VTLK, and GDMI…LGMK. Disordered regions lie at residues 1535 to 1555 and 1605 to 1652; these read NGDDDKAQPLSEDNTSMECDP and TDFD…LEHH. Residues 1620–1652 show a composition bias toward basic and acidic residues; sequence NKDEKSKRREKQKDKEEREKKIQAAEGRLLEHH. HAT repeat units follow at residues 1651–1683, 1685–1722, 1726–1758, 1759–1791, 1828–1860, and 1862–1897; these read HHAPENADEFEKLVRSSPNSSFVWIKYMAFMLS, ADIEKARSIAERALRTINIREEEEKLNIWVAYFNLENE, PPEESVKKVFERARQYCDPKKVYLALLGVYERT, EQYKLADKLLDEMIKKFKQSCKIWLRKIQSSLK, GVADRGRSLFEGVLREYPKRTDLWSVYLDQEIR, and GEDDVIRSLFERAISLSLPPKKMKFLFKKFLEYEKS.

Highly expressed in flowers and at lower levels in roots, leaves, stems and siliques.

The protein resides in the nucleus. It localises to the nucleolus. Functionally, involved in the biogenesis of ribosomal RNA (rRNA). Required for the formation of 5.8S rRNA. Required for normal development of female gametophytes. This Arabidopsis thaliana (Mouse-ear cress) protein is rRNA biogenesis protein RRP5.